We begin with the raw amino-acid sequence, 121 residues long: NADH-ubiquinone oxidoreductase chain 3 (121 aa).

3 helical membrane passes run 11 to 31, 63 to 83, and 90 to 110; these read ILTFFAISFSISTLILALSYF, FYLVAILFLIFDLEISFLFPW, and LSIFGFWSMIVFLIILTLGFI.

This sequence belongs to the complex I subunit 3 family.

It localises to the mitochondrion membrane. The catalysed reaction is a ubiquinone + NADH + 5 H(+)(in) = a ubiquinol + NAD(+) + 4 H(+)(out). Functionally, core subunit of the mitochondrial membrane respiratory chain NADH dehydrogenase (Complex I) that is believed to belong to the minimal assembly required for catalysis. Complex I functions in the transfer of electrons from NADH to the respiratory chain. The immediate electron acceptor for the enzyme is believed to be ubiquinone. The protein is NADH-ubiquinone oxidoreductase chain 3 (NAD3) of Porphyra purpurea (Red seaweed).